The following is a 349-amino-acid chain: ATP phosphoribosyltransferase regulatory subunit (349 aa).

The segment at 325–349 (ANGRGRGVRPRRASARGGRAGTRPR) is disordered. Low complexity predominate over residues 339–349 (ARGGRAGTRPR).

Belongs to the class-II aminoacyl-tRNA synthetase family. HisZ subfamily. As to quaternary structure, heteromultimer composed of HisG and HisZ subunits.

The protein localises to the cytoplasm. It functions in the pathway amino-acid biosynthesis; L-histidine biosynthesis; L-histidine from 5-phospho-alpha-D-ribose 1-diphosphate: step 1/9. Its function is as follows. Required for the first step of histidine biosynthesis. May allow the feedback regulation of ATP phosphoribosyltransferase activity by histidine. This is ATP phosphoribosyltransferase regulatory subunit from Anaeromyxobacter dehalogenans (strain 2CP-C).